Reading from the N-terminus, the 227-residue chain is MKYPFQCFLAKIILLALASSFVSCYDPSPLQDYCVAVPEKNGVFVNGEFCKDPKLVTSDDFFASGLNIPGNTNKRLGSFVNPANIPGLNTLGVGIARIDFAPGGLIPPHIHPRASEIILVIKGKLLVGFVSSNDYNYTLFSKILYPGDVFVHPIGLVQFHANIGKTNAVAIGAVGSQNPGYISVGDAVFGSKPPIDPKILAKAFALDINIVRYLRKVFSPQDDIVND.

Positions 1-24 are cleaved as a signal peptide; that stretch reads MKYPFQCFLAKIILLALASSFVSC. Cys34 and Cys50 form a disulfide bridge. The region spanning 64–212 is the Cupin type-1 domain; it reads SGLNIPGNTN…AFALDINIVR (149 aa). Positions 109, 111, and 116 each coordinate Mn(2+). Residue Asn136 is glycosylated (N-linked (GlcNAc...) asparagine). Residue His160 participates in Mn(2+) binding.

The protein belongs to the germin family. In terms of assembly, oligomer (believed to be a pentamer but probably hexamer).

The protein localises to the secreted. It is found in the extracellular space. The protein resides in the apoplast. Functionally, may play a role in plant defense. Probably has no oxalate oxidase activity even if the active site is conserved. In Arabidopsis thaliana (Mouse-ear cress), this protein is Germin-like protein subfamily 1 member 3.